Consider the following 330-residue polypeptide: D-cysteine desulfhydrase (330 aa).

Lys52 bears the N6-(pyridoxal phosphate)lysine mark.

This sequence belongs to the ACC deaminase/D-cysteine desulfhydrase family. As to quaternary structure, homodimer. Pyridoxal 5'-phosphate serves as cofactor.

The catalysed reaction is D-cysteine + H2O = hydrogen sulfide + pyruvate + NH4(+) + H(+). Functionally, catalyzes the alpha,beta-elimination reaction of D-cysteine and of several D-cysteine derivatives. It could be a defense mechanism against D-cysteine. The sequence is that of D-cysteine desulfhydrase from Serratia proteamaculans (strain 568).